The chain runs to 131 residues: Ribosome-binding factor A (131 aa).

This sequence belongs to the RbfA family. As to quaternary structure, monomer. Binds 30S ribosomal subunits, but not 50S ribosomal subunits or 70S ribosomes.

It is found in the cytoplasm. One of several proteins that assist in the late maturation steps of the functional core of the 30S ribosomal subunit. Associates with free 30S ribosomal subunits (but not with 30S subunits that are part of 70S ribosomes or polysomes). Required for efficient processing of 16S rRNA. May interact with the 5'-terminal helix region of 16S rRNA. The polypeptide is Ribosome-binding factor A (Picosynechococcus sp. (strain ATCC 27264 / PCC 7002 / PR-6) (Agmenellum quadruplicatum)).